Here is a 313-residue protein sequence, read N- to C-terminus: Metaxin-3 (313 aa).

A disordered region spans residues 280 to 313 (EKMDDNLRSSPQHRPHRHEAKPSAPASDRNSTPA).

Belongs to the metaxin family. In terms of assembly, part of a large protein complex spanning both mitochondrial membranes termed the mitochondrial intermembrane space bridging (MIB) complex.

It is found in the mitochondrion. The protein resides in the mitochondrion outer membrane. In terms of biological role, could function in transport of proteins into the mitochondrion. This Danio rerio (Zebrafish) protein is Metaxin-3 (mtx3).